Reading from the N-terminus, the 846-residue chain is Exonuclease 1 (846 aa).

Residues 1-99 form an N-domain region; it reads MGIQGLLQFI…RSRRERRQAN (99 aa). The Mg(2+) site is built by D30, D78, E150, D152, D171, D173, D225, and D270. Positions 129-387 are interaction with MSH3; sequence MAHKVIKAAR…RPESGTVSDA (259 aa). An I-domain region spans residues 138–229; sequence RSQGVDCLVA…ILSGCDYLSS (92 aa). Residues 372 to 396 are disordered; that stretch reads HRNYSPRPESGTVSDAPQLKENPST. Phosphoserine is present on S376. Residues 382 to 396 show a composition bias toward polar residues; sequence GTVSDAPQLKENPST. The interaction with MLH1 stretch occupies residues 388 to 490; that stretch reads PQLKENPSTV…NKFATFLQRK (103 aa). Positions 418–421 match the Nuclear localization signal motif; that stretch reads KRPR. Residues S422 and S454 each carry the phosphoserine modification. K482 is subject to N6-acetyllysine. At T581 the chain carries Phosphothreonine. S598 and S610 each carry phosphoserine. The interaction with MSH2 stretch occupies residues 600-846; the sequence is PTLGTLRSCF…CGRVQRAIFQ (247 aa). The interval 618–781 is disordered; it reads FSRTPSPSPS…SIQKRKHHNA (164 aa). Polar residues-rich tracts occupy residues 620 to 631 and 639 to 654; these read RTPSPSPSTALQ and SPTS…VSQL. T621 carries the post-translational modification Phosphothreonine. 4 positions are modified to phosphoserine: S623, S639, S660, and S674. Positions 655–671 are enriched in basic and acidic residues; the sequence is KSEESSDDESHPLREEA. Polar residues-rich tracts occupy residues 672–689, 713–722, and 743–754; these read CSSQ…SSNA, DSQSDQTSKL, and KSSSADSLSTTK. At S714 the chain carries Phosphoserine; by ATR. Phosphoserine is present on S746. Residues 787–846 are interaction with MLH1; the sequence is LQIKLNELWKNFGFKKDSEKLPPCKKPLSPVRDNIQLTPEAEEDIFNKPECGRVQRAIFQ.

This sequence belongs to the XPG/RAD2 endonuclease family. EXO1 subfamily. In terms of assembly, interacts with the MLH1-PMS2 heterodimer via MLH1. Interacts with MSH3. Interacts with the MSH2-MSH6 heterodimer via MSH2, and this interaction may increase the processivity of the 5'-&gt;3' exonuclease activity. Interacts with PCNA, and this interaction may both stimulate the cryptic 3'-&gt;5' exonuclease activity and suppress the 5'-&gt;3' exonuclease activity. Interacts with WRN, and this interaction stimulates both the 5'-&gt;3' exonuclease activity and cleavage of 5'-overhanging flap structures. Interacts with RECQL/RECQ1, and this interaction stimulates cleavage of 5'-overhanging flap structures. Interacts with DNA helicase ZGRF1; the interaction is increased following DNA damage induction. The cofactor is Mg(2+). In terms of processing, phosphorylated upon DNA damage and in response to agents stalling DNA replication, probably by ATM or ATR. Phosphorylation at Ser-454, Thr-621 and Ser-714 is induced upon DNA-damage caused by treatment with hydroxyurea (HU) but not upon IR treatment. The HU-induced EXO1 triple phosphorylation facilitates destabilization/degradation of the protein. In terms of tissue distribution, highly expressed in bone marrow, testis and thymus. Expressed at lower levels in colon, lymph nodes, ovary, placenta, prostate, small intestine, spleen and stomach.

The protein resides in the nucleus. 5'-&gt;3' double-stranded DNA exonuclease which may also possess a cryptic 3'-&gt;5' double-stranded DNA exonuclease activity. Functions in DNA mismatch repair (MMR) to excise mismatch-containing DNA tracts directed by strand breaks located either 5' or 3' to the mismatch. Also exhibits endonuclease activity against 5'-overhanging flap structures similar to those generated by displacement synthesis when DNA polymerase encounters the 5'-end of a downstream Okazaki fragment. Required for somatic hypermutation (SHM) and class switch recombination (CSR) of immunoglobulin genes. Essential for male and female meiosis. In Homo sapiens (Human), this protein is Exonuclease 1 (EXO1).